The following is a 348-amino-acid chain: D-erythrose-4-phosphate dehydrogenase (348 aa).

Residues 12 to 13 (RI) and Arg-81 each bind NAD(+). Residues 154-156 (SCT), Arg-200, 213-214 (TK), and Arg-236 contribute to the substrate site. Cys-155 (nucleophile) is an active-site residue. Position 318 (Asn-318) interacts with NAD(+).

Belongs to the glyceraldehyde-3-phosphate dehydrogenase family. Epd subfamily. In terms of assembly, homotetramer.

The protein resides in the cytoplasm. It carries out the reaction D-erythrose 4-phosphate + NAD(+) + H2O = 4-phospho-D-erythronate + NADH + 2 H(+). The protein operates within cofactor biosynthesis; pyridoxine 5'-phosphate biosynthesis; pyridoxine 5'-phosphate from D-erythrose 4-phosphate: step 1/5. Functionally, catalyzes the NAD-dependent conversion of D-erythrose 4-phosphate to 4-phosphoerythronate. The chain is D-erythrose-4-phosphate dehydrogenase from Salmonella gallinarum (strain 287/91 / NCTC 13346).